The primary structure comprises 161 residues: uncharacterized protein (161 aa).

The RING-type zinc-finger motif lies at 72 to 134 (CAICLDNLQN…EAQQTCPTCR (63 aa)). The disordered stretch occupies residues 140–161 (DKEVEEEERQRNLEELHDSMYG).

This is an uncharacterized protein from Caenorhabditis elegans.